Reading from the N-terminus, the 390-residue chain is UPF0229 protein ABC1477 (390 aa).

2 disordered regions span residues 1–31 and 81–118; these read MEKD…RHQE and VGQG…QAGE. Over residues 7–16 the composition is skewed to polar residues; the sequence is RQFTISQENW. Basic and acidic residues-rich tracts occupy residues 22–31 and 86–100; these read GFQDQRRHQE and GDSK…DPNG.

Belongs to the UPF0229 family.

In Shouchella clausii (strain KSM-K16) (Alkalihalobacillus clausii), this protein is UPF0229 protein ABC1477.